Here is a 152-residue protein sequence, read N- to C-terminus: Superoxide dismutase [Cu-Zn] (152 aa).

Position 2 is an N-acetylserine (Ser2). 3 residues coordinate Cu cation: His44, His46, and His61. An intrachain disulfide couples Cys55 to Cys144. Zn(2+)-binding residues include His61, His69, His78, and Asp81. His118 is a Cu cation binding site.

The protein belongs to the Cu-Zn superoxide dismutase family. In terms of assembly, monomer. Cu cation serves as cofactor. Requires Zn(2+) as cofactor.

The protein resides in the cytoplasm. The enzyme catalyses 2 superoxide + 2 H(+) = H2O2 + O2. Inhibited by KCN and diethyldithiocarbamate. Functionally, destroys radicals which are normally produced within the cells and which are toxic to biological systems. The plasma superoxide dismutase has phagocytosis-stimulating activity and may play an important role in the biological defenses of the organism. This is Superoxide dismutase [Cu-Zn] from Halocynthia roretzi (Sea squirt).